A 214-amino-acid polypeptide reads, in one-letter code: uncharacterized protein (214 aa).

CBS domains are found at residues 7–65 (MDKN…KKPI) and 69–129 (MRPV…EIPV).

This is an uncharacterized protein from Methanocaldococcus jannaschii (strain ATCC 43067 / DSM 2661 / JAL-1 / JCM 10045 / NBRC 100440) (Methanococcus jannaschii).